Reading from the N-terminus, the 37-residue chain is Neuropeptide Y1-like conopeptide (37 aa).

The residue at position 37 (Phe37) is a Phenylalanine amide.

This sequence belongs to the NPY family. In terms of tissue distribution, expressed by the venom duct.

It is found in the secreted. Its function is as follows. Causes hyperactivity such as jumping, rapid circling and tail flicking, when intraventricularly injected into mice brain. The chain is Neuropeptide Y1-like conopeptide from Conus betulinus (Beech cone).